Here is a 294-residue protein sequence, read N- to C-terminus: Beta-glucoside kinase (294 aa).

5-11 (AFDIGGT) lines the ATP pocket.

This sequence belongs to the ROK (NagC/XylR) family.

The enzyme catalyses D-cellobiose + ATP = 6-phospho-beta-D-glucosyl-(1-&gt;4)-D-glucose + ADP + H(+). Catalyzes the ATP-dependent phosphorylation of cellobiose to produce cellobiose-6'-P. May have a dual role of kinase and transcriptional regulator of the cellobiose-PTS operon. This Listeria innocua serovar 6a (strain ATCC BAA-680 / CLIP 11262) protein is Beta-glucoside kinase (bglK).